The primary structure comprises 238 residues: Tetrahydromethanopterin S-methyltransferase subunit A 1 (238 aa).

Over 2-218 (VEKKSPAEGW…RMFAGMYSGK (217 aa)) the chain is Cytoplasmic. His84 contacts 5-hydroxybenzimidazolylcob(I)amide. The chain crosses the membrane as a helical span at residues 219-237 (VQGIMIGLAFTLTLGILLL). Val238 is a topological domain (extracellular).

The protein belongs to the MtrA family. As to quaternary structure, the complex is composed of 8 subunits; MtrA, MtrB, MtrC, MtrD, MtrE, MtrF, MtrG and MtrH. It depends on 5-hydroxybenzimidazolylcob(I)amide as a cofactor.

Its subcellular location is the cell membrane. It carries out the reaction 5-methyl-5,6,7,8-tetrahydromethanopterin + coenzyme M + 2 Na(+)(in) = 5,6,7,8-tetrahydromethanopterin + methyl-coenzyme M + 2 Na(+)(out). Its pathway is one-carbon metabolism; methanogenesis from CO(2); methyl-coenzyme M from 5,10-methylene-5,6,7,8-tetrahydromethanopterin: step 2/2. In terms of biological role, part of a complex that catalyzes the formation of methyl-coenzyme M and tetrahydromethanopterin from coenzyme M and methyl-tetrahydromethanopterin. This is an energy-conserving, sodium-ion translocating step. The protein is Tetrahydromethanopterin S-methyltransferase subunit A 1 of Methanothermobacter marburgensis (strain ATCC BAA-927 / DSM 2133 / JCM 14651 / NBRC 100331 / OCM 82 / Marburg) (Methanobacterium thermoautotrophicum).